We begin with the raw amino-acid sequence, 231 residues long: uncharacterized protein (231 aa).

The next 7 membrane-spanning stretches (helical) occupy residues 26–46, 56–76, 84–104, 112–132, 142–162, 163–183, and 206–226; these read TYSW…LTAQ, SLRL…SMFA, AGAL…ALLF, ITAF…GFVI, FFLF…FVGS, SALS…LTAY, and INGA…LLNI.

It belongs to the BI1 family.

It is found in the cell membrane. This is an uncharacterized protein from Deinococcus radiodurans (strain ATCC 13939 / DSM 20539 / JCM 16871 / CCUG 27074 / LMG 4051 / NBRC 15346 / NCIMB 9279 / VKM B-1422 / R1).